The chain runs to 210 residues: Molybdenum cofactor guanylyltransferase (210 aa).

Residues 9–11 (LAG), K21, D66, and D95 contribute to the GTP site. D95 serves as a coordination point for Mg(2+).

This sequence belongs to the MobA family. Monomer. The cofactor is Mg(2+).

It is found in the cytoplasm. It catalyses the reaction Mo-molybdopterin + GTP + H(+) = Mo-molybdopterin guanine dinucleotide + diphosphate. In terms of biological role, transfers a GMP moiety from GTP to Mo-molybdopterin (Mo-MPT) cofactor (Moco or molybdenum cofactor) to form Mo-molybdopterin guanine dinucleotide (Mo-MGD) cofactor. The polypeptide is Molybdenum cofactor guanylyltransferase (Syntrophotalea carbinolica (strain DSM 2380 / NBRC 103641 / GraBd1) (Pelobacter carbinolicus)).